A 254-amino-acid polypeptide reads, in one-letter code: CRISPR-associated endoribonuclease Cas6 1 (254 aa).

Y32 acts as the Proton acceptor in catalysis. Residue H47 is the Proton donor of the active site.

Belongs to the CRISPR-associated protein Cas6/Cse3/CasE family.

Its function is as follows. CRISPR (clustered regularly interspaced short palindromic repeat) is an adaptive immune system that provides protection against mobile genetic elements (viruses, transposable elements and conjugative plasmids). CRISPR clusters contain sequences complementary to antecedent mobile elements and target invading nucleic acids. CRISPR clusters are transcribed and processed into CRISPR RNA (crRNA). This protein processes pre-crRNA into individual crRNA units. This chain is CRISPR-associated endoribonuclease Cas6 1 (cas6a), found in Methanocaldococcus jannaschii (strain ATCC 43067 / DSM 2661 / JAL-1 / JCM 10045 / NBRC 100440) (Methanococcus jannaschii).